Here is a 478-residue protein sequence, read N- to C-terminus: Aspartyl/glutamyl-tRNA(Asn/Gln) amidotransferase subunit B (478 aa).

It belongs to the GatB/GatE family. GatB subfamily. As to quaternary structure, heterotrimer of A, B and C subunits.

The enzyme catalyses L-glutamyl-tRNA(Gln) + L-glutamine + ATP + H2O = L-glutaminyl-tRNA(Gln) + L-glutamate + ADP + phosphate + H(+). It catalyses the reaction L-aspartyl-tRNA(Asn) + L-glutamine + ATP + H2O = L-asparaginyl-tRNA(Asn) + L-glutamate + ADP + phosphate + 2 H(+). Its function is as follows. Allows the formation of correctly charged Asn-tRNA(Asn) or Gln-tRNA(Gln) through the transamidation of misacylated Asp-tRNA(Asn) or Glu-tRNA(Gln) in organisms which lack either or both of asparaginyl-tRNA or glutaminyl-tRNA synthetases. The reaction takes place in the presence of glutamine and ATP through an activated phospho-Asp-tRNA(Asn) or phospho-Glu-tRNA(Gln). The chain is Aspartyl/glutamyl-tRNA(Asn/Gln) amidotransferase subunit B from Dichelobacter nodosus (strain VCS1703A).